The chain runs to 231 residues: GSK-3-binding protein FRAT2 (231 aa).

2 disordered regions span residues 1–24 and 53–109; these read MPCR…DDSF and DTAH…PGAV. Positions 7-23 are enriched in acidic residues; it reads EEEEAGDEAEGEEDDDS. An involved in GSK-3 binding region spans residues 172-194; it reads DPHRLLQQLVLSGNLIKEAVRRL. The disordered stretch occupies residues 203–231; the sequence is ATSPASAPGSGGGRSGPDSVTLQPSGAWL.

It belongs to the GSK-3-binding protein family. Binds GSK-3 and prevents GSK-3-dependent phosphorylation.

In terms of biological role, positively regulates the Wnt signaling pathway by stabilizing beta-catenin through the association with GSK-3. The chain is GSK-3-binding protein FRAT2 (Frat2) from Mus musculus (Mouse).